Here is a 389-residue protein sequence, read N- to C-terminus: Ribonucleoside-diphosphate reductase subunit M2 (389 aa).

Residue Ser-20 is modified to Phosphoserine. A Phosphothreonine modification is found at Thr-33. Residues 49-51 (RRI) carry the Cy motif. Positions 138, 169, and 172 each coordinate Fe cation. Tyr-176 is a catalytic residue. The Fe cation site is built by Glu-232, Glu-266, and His-269.

The protein belongs to the ribonucleoside diphosphate reductase small chain family. As to quaternary structure, heterodimer of a large and a small subunit. Interacts (via Cy motif and when phosphorylated at Thr-33) with CCNF; the interaction occurs exclusively in G2 and early M. Fe cation is required as a cofactor. In terms of processing, phosphorylation on Ser-20 relieves the inhibitory effect on Wnt signaling. Phosphorylated on Thr-33 by CDK1 and CDK2; predominantly in G2 and M phase. Ubiquitinated by the SCF(CCNF) E3 ubiquitin-protein ligase complex; leading to its degradation by the proteasome.

It is found in the cytoplasm. It localises to the nucleus. The catalysed reaction is a 2'-deoxyribonucleoside 5'-diphosphate + [thioredoxin]-disulfide + H2O = a ribonucleoside 5'-diphosphate + [thioredoxin]-dithiol. In terms of biological role, provides the precursors necessary for DNA synthesis. Catalyzes the biosynthesis of deoxyribonucleotides from the corresponding ribonucleotides. Inhibits Wnt signaling. In Homo sapiens (Human), this protein is Ribonucleoside-diphosphate reductase subunit M2 (RRM2).